Reading from the N-terminus, the 316-residue chain is Olfactory receptor 6B9 (316 aa).

At 1 to 22 the chain is on the extracellular side; it reads MENITNISEFILMGFPTAPWLQ. N-linked (GlcNAc...) asparagine glycosylation is found at Asn3 and Asn6. A helical membrane pass occupies residues 23–43; it reads ILLFSIFFITYVFVLLENLVI. The Cytoplasmic segment spans residues 44-64; sequence ILTVWVTGSLHKPMYYFLSTM. Residues 65-85 form a helical membrane-spanning segment; sequence SFLEAWYISVTVPKMLAGFLF. The Extracellular portion of the chain corresponds to 86-97; sequence RPNTISFLGCMT. Cys95 and Cys187 are oxidised to a cystine. Residues 98-118 form a helical membrane-spanning segment; that stretch reads QLYFFMSLACTECVLLAAMAY. Residues 119 to 132 lie on the Cytoplasmic side of the membrane; the sequence is DRYVAICWPLRYPV. A helical transmembrane segment spans residues 133–153; that stretch reads MMTTGFCVQLTISSWVSGFTI. Topologically, residues 154-199 are extracellular; sequence SMAKVYFISRVAFCGNNVLNHFFCDVSPILKLACMNLSMAETVDFA. Residues 200–220 form a helical membrane-spanning segment; sequence LAIVILIFPLSATVLSYGFIV. Over 221-237 the chain is Cytoplasmic; the sequence is STVLQIPSATGQRKAFS. The helical transmembrane segment at 238–258 threads the bilayer; it reads TCASHLTVVVIFYTAVIFMYV. Over 259–269 the chain is Extracellular; it reads RPRAIASFNSN. Residues 270 to 290 form a helical membrane-spanning segment; the sequence is KLISAIYAVFTPMLNPIIYCL. The Cytoplasmic portion of the chain corresponds to 291 to 316; that stretch reads RNKEVKDAIRKTIAGGRAPALGESIS.

The protein belongs to the G-protein coupled receptor 1 family. Olfactory epithelium.

The protein resides in the cell membrane. In terms of biological role, odorant receptor. The protein is Olfactory receptor 6B9 of Mus musculus (Mouse).